A 107-amino-acid polypeptide reads, in one-letter code: Histone H4 (107 aa).

Over residues 1 to 16 (MPGRGKGGKGGKGYGK) the composition is skewed to gly residues. A disordered region spans residues 1–23 (MPGRGKGGKGGKGYGKVGAKRHA). A DNA-binding region spans residues 17 to 21 (VGAKR).

Belongs to the histone H4 family. In terms of assembly, the nucleosome is a histone octamer containing two molecules each of H2A, H2B, H3 and H4 assembled in one H3-H4 heterotetramer and two H2A-H2B heterodimers. The octamer wraps approximately 147 bp of DNA.

The protein resides in the nucleus. Its subcellular location is the chromosome. Functionally, core component of nucleosome. Nucleosomes wrap and compact DNA into chromatin, limiting DNA accessibility to the cellular machineries which require DNA as a template. Histones thereby play a central role in transcription regulation, DNA repair, DNA replication and chromosomal stability. DNA accessibility is regulated via a complex set of post-translational modifications of histones, also called histone code, and nucleosome remodeling. The protein is Histone H4 of Euplotes crassus.